Consider the following 467-residue polypeptide: Keratin, type 1 cytoskeletal 11 (467 aa).

The head stretch occupies residues 1-100 (MSYSSFSIAQ…GGTDFLLGTS (100 aa)). Over residues 12–30 (SRVPSLSGTRSSSSYSLKS) the composition is skewed to low complexity. A disordered region spans residues 12-32 (SRVPSLSGTRSSSSYSLKSDL). The interval 101 to 137 (GKEAMQNLNDRLADYLARVRSLEDRNRELEQKIREWY) is coil 1A. In terms of domain architecture, IF rod spans 101–413 (GKEAMQNLND…TLLEGDAGRS (313 aa)). Residues 138 to 156 (EKQGAGTKRKDFSHYFKII) form a linker 1 region. The interval 157–248 (ADLQNQINAG…SHDEDMKALR (92 aa)) is coil 1B. Residues 249–268 (SQLGGQVNVEVDAAPAEDLT) form a linker 12 region. The segment at 269-416 (KKLEIIRQRY…EGDAGRSHSS (148 aa)) is coil 2. Positions 409 to 430 (DAGRSHSSSHLSSTVSKDKVPV) are disordered. The segment at 417–463 (SHLSSTVSKDKVPVSSPNVITKVRTIVEEKINGQVISKKEYEGSPDQ) is tail.

This sequence belongs to the intermediate filament family. In terms of assembly, heterotetramer of two type I and two type II keratins. Expressed in the outermost cell layers of skin epidermis (at protein level).

In Protopterus aethiopicus (Marbled lungfish), this protein is Keratin, type 1 cytoskeletal 11.